We begin with the raw amino-acid sequence, 76 residues long: uncharacterized protein (76 aa).

The tract at residues 27–76 (SINNGEGSSVVHRDATAPPTPPVVPTSTLQVPGLQRARTPEPNDPRVANL) is disordered.

This is an uncharacterized protein from Caenorhabditis elegans.